We begin with the raw amino-acid sequence, 334 residues long: GTPase Obg (334 aa).

Residues 1 to 159 (MRFVDEVVIK…KEVRLELNLL (159 aa)) form the Obg domain. An OBG-type G domain is found at 160 to 331 (ADIALLGLPN…LAKKLNEFLH (172 aa)). GTP-binding positions include 166-173 (GLPNAGKS), 191-195 (FTTMY), 212-215 (DIPG), 282-285 (NKID), and 312-314 (SAA). 2 residues coordinate Mg(2+): Ser173 and Thr193.

This sequence belongs to the TRAFAC class OBG-HflX-like GTPase superfamily. OBG GTPase family. In terms of assembly, monomer. The cofactor is Mg(2+).

The protein resides in the cytoplasm. Its function is as follows. An essential GTPase which binds GTP, GDP and possibly (p)ppGpp with moderate affinity, with high nucleotide exchange rates and a fairly low GTP hydrolysis rate. Plays a role in control of the cell cycle, stress response, ribosome biogenesis and in those bacteria that undergo differentiation, in morphogenesis control. In Francisella philomiragia subsp. philomiragia (strain ATCC 25017 / CCUG 19701 / FSC 153 / O#319-036), this protein is GTPase Obg.